Here is a 439-residue protein sequence, read N- to C-terminus: Enolase 1 (439 aa).

Residues histidine 160 and glutamate 169 each coordinate substrate. Glutamate 212 (proton donor) is an active-site residue. The Mg(2+) site is built by aspartate 247, glutamate 296, and aspartate 323. Substrate contacts are provided by glutamate 296 and aspartate 323. The Proton acceptor role is filled by lysine 348. Residues 375–378 (SHRS) and lysine 399 contribute to the substrate site.

The protein belongs to the enolase family. As to quaternary structure, homodimer. The cofactor is Mg(2+).

The protein localises to the cytoplasm. It carries out the reaction (2R)-2-phosphoglycerate = phosphoenolpyruvate + H2O. It participates in carbohydrate degradation; glycolysis; pyruvate from D-glyceraldehyde 3-phosphate: step 4/5. This Debaryomyces hansenii (strain ATCC 36239 / CBS 767 / BCRC 21394 / JCM 1990 / NBRC 0083 / IGC 2968) (Yeast) protein is Enolase 1 (ENO1).